The primary structure comprises 99 residues: Aspartyl/glutamyl-tRNA(Asn/Gln) amidotransferase subunit C (99 aa).

Belongs to the GatC family. As to quaternary structure, heterotrimer of A, B and C subunits.

The enzyme catalyses L-glutamyl-tRNA(Gln) + L-glutamine + ATP + H2O = L-glutaminyl-tRNA(Gln) + L-glutamate + ADP + phosphate + H(+). The catalysed reaction is L-aspartyl-tRNA(Asn) + L-glutamine + ATP + H2O = L-asparaginyl-tRNA(Asn) + L-glutamate + ADP + phosphate + 2 H(+). Allows the formation of correctly charged Asn-tRNA(Asn) or Gln-tRNA(Gln) through the transamidation of misacylated Asp-tRNA(Asn) or Glu-tRNA(Gln) in organisms which lack either or both of asparaginyl-tRNA or glutaminyl-tRNA synthetases. The reaction takes place in the presence of glutamine and ATP through an activated phospho-Asp-tRNA(Asn) or phospho-Glu-tRNA(Gln). This Bifidobacterium longum (strain NCC 2705) protein is Aspartyl/glutamyl-tRNA(Asn/Gln) amidotransferase subunit C.